The following is a 295-amino-acid chain: Protoheme IX farnesyltransferase (295 aa).

9 consecutive transmembrane segments (helical) span residues 24-43 (IMYL…PGSI), 47-69 (LALI…NMWY), 94-114 (SALE…AIAV), 117-137 (ISAI…TIWL), 144-164 (NIVI…AVVT), 171-191 (GFVL…ALSL), 216-236 (KYIL…ALFL), 241-261 (FYLG…VSIM), and 272-292 (MFSY…LCSI).

This sequence belongs to the UbiA prenyltransferase family. Protoheme IX farnesyltransferase subfamily.

The protein resides in the cell membrane. It carries out the reaction heme b + (2E,6E)-farnesyl diphosphate + H2O = Fe(II)-heme o + diphosphate. Its pathway is porphyrin-containing compound metabolism; heme O biosynthesis; heme O from protoheme: step 1/1. In terms of biological role, converts heme B (protoheme IX) to heme O by substitution of the vinyl group on carbon 2 of heme B porphyrin ring with a hydroxyethyl farnesyl side group. The protein is Protoheme IX farnesyltransferase of Wolbachia sp. subsp. Brugia malayi (strain TRS).